Here is a 473-residue protein sequence, read N- to C-terminus: Sulfhydrylase-like protein lolC2 (473 aa).

Lysine 226 bears the N6-(pyridoxal phosphate)lysine mark.

It belongs to the trans-sulfuration enzymes family. The cofactor is pyridoxal 5'-phosphate.

It participates in alkaloid biosynthesis. Functionally, sulfhydrylase-like protein; part of the gene cluster that mediates the biosynthesis of loline alkaloids, potent insecticidal agents composed of a pyrrolizidine ring system and an uncommon ether bridge linking carbons 2 and 7. Lolines are structurally differentiated by the various modifications of the L-amino group and include norloline, loline, N-methylloline, N-acetylloline, N-acetylnorloline, and N-formylloline. The first committed step is the condensation of O-acetyl-L-homoserine (derived from L-aspartic acid) and L-proline, probably catalyzed by the gamma-type pyridoxal 5'-phosphate(PLP)-dependent enzyme lolC, to give the diamino diacid, NACPP. Ensuing cyclization, decarboxylation, and acetylation steps yield 1-exo-acetamidopyrrolizidine (AcAP). LolO is required for installation of the ether bridge upon the pathway intermediate, 1-exo-acetamidopyrrolizidine (AcAP). In sequential 2-oxoglutarate- and O(2)-consuming steps, lolO removes hydrogens from C2 and C7 of AcAP to form both carbon-oxygen bonds in N-acetylnorloline (NANL), the precursor to all other lolines. The enzymes lolD, lolE, lolF and lolT have also been proposed to be involved in the ether-bridge installation. Further processing of the exocyclic moiety of NANL by fungal N-acetamidase (LolN), methyltransferase (LolM), and cytochrome P450 (LolP) enzymes, with occasional involvement of a plant acetyltransferase, generates the other known lolines. LolN transforms NANL to norlonine which is monomethylated and dimethylated to respectively lonine and N-methyllonine (NML) by lolM. LolP catalyzes hydroxylation of the methyl group in N-methylloline (NML) and further oxygenation to N-formylloline (NFL). A plant acetyltransferase is responsible for the acetylation of loline to form N-acetylloline (NAL). LolA might interact with aspartate kinase to prevent feedback inhibition of its activity by these end products and thereby promote production of L-homoserine from L-aspartate. This Epichloe uncinata (Endophyte fungus) protein is Sulfhydrylase-like protein lolC2.